The following is a 189-amino-acid chain: Pyridoxal 5'-phosphate synthase subunit PdxT (189 aa).

47-49 (GES) lines the L-glutamine pocket. Residue C79 is the Nucleophile of the active site. L-glutamine contacts are provided by residues R106 and 135-136 (IR). Active-site charge relay system residues include H171 and E173.

The protein belongs to the glutaminase PdxT/SNO family. As to quaternary structure, in the presence of PdxS, forms a dodecamer of heterodimers. Only shows activity in the heterodimer.

The enzyme catalyses aldehydo-D-ribose 5-phosphate + D-glyceraldehyde 3-phosphate + L-glutamine = pyridoxal 5'-phosphate + L-glutamate + phosphate + 3 H2O + H(+). It catalyses the reaction L-glutamine + H2O = L-glutamate + NH4(+). Its pathway is cofactor biosynthesis; pyridoxal 5'-phosphate biosynthesis. Catalyzes the hydrolysis of glutamine to glutamate and ammonia as part of the biosynthesis of pyridoxal 5'-phosphate. The resulting ammonia molecule is channeled to the active site of PdxS. This Caldanaerobacter subterraneus subsp. tengcongensis (strain DSM 15242 / JCM 11007 / NBRC 100824 / MB4) (Thermoanaerobacter tengcongensis) protein is Pyridoxal 5'-phosphate synthase subunit PdxT.